Consider the following 166-residue polypeptide: MGFLVASAVLVCVTSQRVPGYCKKKPAVGPCKALIEKWYFDYSTQSCKTFYYGGCGGNGNKFSSRKKCREACLPKRPSVPVCKQMPDPGFCRAYMPHWFFNSKSGYCEGFVYGGCQGNDNRFKSCWQCMKKCRTAREANRLCWKLTKEFNKKFLRNVPTAKPLPPK.

An N-terminal signal peptide occupies residues 1-15 (MGFLVASAVLVCVTS). BPTI/Kunitz inhibitor domains lie at 22–72 (CKKK…REAC) and 82–132 (CKQM…MKKC). Disulfide bonds link Cys22–Cys72, Cys31–Cys55, Cys47–Cys68, Cys82–Cys132, Cys91–Cys115, and Cys107–Cys128.

The protein localises to the secreted. Functionally, thrombin-specific inhibitor from tick hemolymph (Ki=20 nM). The protein is Amblin of Amblyomma hebraeum (South African bont tick).